The following is a 116-amino-acid chain: Non-specific lipid-transfer protein C, cotyledon-specific isoform (116 aa).

The first 24 residues, 1–24 (MKNVVFSVLLLLSFLFCLANTNEA), serve as a signal peptide directing secretion. Disulfide bonds link cysteine 28–cysteine 76, cysteine 38–cysteine 53, cysteine 54–cysteine 98, and cysteine 74–cysteine 112.

It belongs to the plant LTP family.

Functionally, plant non-specific lipid-transfer proteins transfer phospholipids as well as galactolipids across membranes. May play a role in wax or cutin deposition in the cell walls of expanding epidermal cells and certain secretory tissues. The chain is Non-specific lipid-transfer protein C, cotyledon-specific isoform from Ricinus communis (Castor bean).